A 302-amino-acid chain; its full sequence is Oxygen-dependent coproporphyrinogen-III oxidase (302 aa).

Residue S90 coordinates substrate. A divalent metal cation is bound by residues H94 and H104. The active-site Proton donor is the H104. 106-108 (NVR) is a substrate binding site. Positions 143 and 173 each coordinate a divalent metal cation. Positions 238-273 (YVEFNLIYDRGTIFGLQSNGRTESILLSMPPIVKWR) are important for dimerization.

It belongs to the aerobic coproporphyrinogen-III oxidase family. Homodimer. Requires a divalent metal cation as cofactor.

It is found in the cytoplasm. It catalyses the reaction coproporphyrinogen III + O2 + 2 H(+) = protoporphyrinogen IX + 2 CO2 + 2 H2O. The protein operates within porphyrin-containing compound metabolism; protoporphyrin-IX biosynthesis; protoporphyrinogen-IX from coproporphyrinogen-III (O2 route): step 1/1. In terms of biological role, involved in the heme biosynthesis. Catalyzes the aerobic oxidative decarboxylation of propionate groups of rings A and B of coproporphyrinogen-III to yield the vinyl groups in protoporphyrinogen-IX. This chain is Oxygen-dependent coproporphyrinogen-III oxidase, found in Methylobacillus flagellatus (strain ATCC 51484 / DSM 6875 / VKM B-1610 / KT).